Here is a 153-residue protein sequence, read N- to C-terminus: Ribosome maturation factor RimP (153 aa).

It belongs to the RimP family.

The protein localises to the cytoplasm. In terms of biological role, required for maturation of 30S ribosomal subunits. This is Ribosome maturation factor RimP from Clostridioides difficile (strain 630) (Peptoclostridium difficile).